The chain runs to 270 residues: Formamidopyrimidine-DNA glycosylase (270 aa).

P2 acts as the Schiff-base intermediate with DNA in catalysis. Catalysis depends on E3, which acts as the Proton donor. K57 (proton donor; for beta-elimination activity) is an active-site residue. Residues H90, R109, and K150 each coordinate DNA. Residues 235 to 269 form an FPG-type zinc finger; it reads LVYGNKDKPCPRCGTKIKSIIIGQRNSFFCPQCQK. Catalysis depends on R259, which acts as the Proton donor; for delta-elimination activity.

It belongs to the FPG family. In terms of assembly, monomer. Zn(2+) is required as a cofactor.

It carries out the reaction Hydrolysis of DNA containing ring-opened 7-methylguanine residues, releasing 2,6-diamino-4-hydroxy-5-(N-methyl)formamidopyrimidine.. It catalyses the reaction 2'-deoxyribonucleotide-(2'-deoxyribose 5'-phosphate)-2'-deoxyribonucleotide-DNA = a 3'-end 2'-deoxyribonucleotide-(2,3-dehydro-2,3-deoxyribose 5'-phosphate)-DNA + a 5'-end 5'-phospho-2'-deoxyribonucleoside-DNA + H(+). Its function is as follows. Involved in base excision repair of DNA damaged by oxidation or by mutagenic agents. Acts as a DNA glycosylase that recognizes and removes damaged bases. Has a preference for oxidized purines, such as 7,8-dihydro-8-oxoguanine (8-oxoG). Has AP (apurinic/apyrimidinic) lyase activity and introduces nicks in the DNA strand. Cleaves the DNA backbone by beta-delta elimination to generate a single-strand break at the site of the removed base with both 3'- and 5'-phosphates. The polypeptide is Formamidopyrimidine-DNA glycosylase (Histophilus somni (strain 2336) (Haemophilus somnus)).